Consider the following 410-residue polypeptide: MAEGKGFLRLEWARDHMPVIAEIRKRFLDEKPFKGINIAMALHVEAKTGIFSLLLKEGGANVRMASCNPLSSDDSVVESLKTDYGMPVFARKGETQEEYYENLQRTLEKPPDIIIDDGGDLTKLVHTERKDLSKNIMGGNEETTTGVVRLKAMEKAGVLLFPMFDVNDANMKHLFDNRYGTGQSTLDGIMNSTNLLIAGRNVVVAGYGYCGRGIAMRLKGMGANVIVTEIDPIKANEAIMDGFQVRRMNDAIRYADMVITATGMKDVVKYEDALVAKKNIVLANAGHFDNEVAVKEIEKHSLEKREVREFVKRYRLENGNTVDVIADGRLVNLAAGQGHPVEIMDLSFALQALTAEYLVKNHQNLEKKVYPVPPEIDRYVAEIRLKQFGGELDTLTEDQIKYLNSWDEGT.

Residues Asp-117 and Glu-142 each coordinate substrate. 143 to 145 lines the NAD(+) pocket; the sequence is TTT. Substrate is bound by residues Lys-172 and Asp-176. Residues Asn-177, 206–211, Glu-229, 285–287, and Asn-332 contribute to the NAD(+) site; these read GYGYCG and AGH.

It belongs to the adenosylhomocysteinase family. Requires NAD(+) as cofactor.

It localises to the cytoplasm. It carries out the reaction S-adenosyl-L-homocysteine + H2O = L-homocysteine + adenosine. The protein operates within amino-acid biosynthesis; L-homocysteine biosynthesis; L-homocysteine from S-adenosyl-L-homocysteine: step 1/1. May play a key role in the regulation of the intracellular concentration of adenosylhomocysteine. The protein is Adenosylhomocysteinase of Thermoplasma volcanium (strain ATCC 51530 / DSM 4299 / JCM 9571 / NBRC 15438 / GSS1).